A 283-amino-acid polypeptide reads, in one-letter code: Pantothenate synthetase (283 aa).

30 to 37 (MGNLHAGH) lines the ATP pocket. H37 (proton donor) is an active-site residue. Q61 contributes to the (R)-pantoate binding site. Q61 serves as a coordination point for beta-alanine. 149 to 152 (GEKD) contributes to the ATP binding site. Residue Q155 participates in (R)-pantoate binding. ATP is bound by residues V178 and 186-189 (LSSR).

The protein belongs to the pantothenate synthetase family. As to quaternary structure, homodimer.

It localises to the cytoplasm. It carries out the reaction (R)-pantoate + beta-alanine + ATP = (R)-pantothenate + AMP + diphosphate + H(+). It participates in cofactor biosynthesis; (R)-pantothenate biosynthesis; (R)-pantothenate from (R)-pantoate and beta-alanine: step 1/1. Functionally, catalyzes the condensation of pantoate with beta-alanine in an ATP-dependent reaction via a pantoyl-adenylate intermediate. The protein is Pantothenate synthetase of Azotobacter vinelandii (strain DJ / ATCC BAA-1303).